The primary structure comprises 511 residues: Sulfate adenylyltransferase (511 aa).

The segment at Met-1–Tyr-167 is N-terminal. The interval Asp-168 to Lys-393 is catalytic. Gln-195 provides a ligand contact to sulfate. Residues Gln-195–Asn-198 and Gly-289–His-292 contribute to the ATP site. Active-site residues include Thr-196, Arg-197, and Asn-198. Arg-197 contacts sulfate. Ala-293 contributes to the sulfate binding site. Val-331 lines the ATP pocket. Positions Gln-394–Phe-511 are required for oligomerization; adenylyl-sulfate kinase-like.

The protein belongs to the sulfate adenylyltransferase family. As to quaternary structure, homohexamer. Dimer of trimers.

It localises to the cytoplasm. It carries out the reaction sulfate + ATP + H(+) = adenosine 5'-phosphosulfate + diphosphate. It functions in the pathway sulfur metabolism; hydrogen sulfide biosynthesis; sulfite from sulfate: step 1/3. Catalyzes the first intracellular reaction of sulfate assimilation, forming adenosine-5'-phosphosulfate (APS) from inorganic sulfate and ATP. Plays an important role in sulfate activation as a component of the biosynthesis pathway of sulfur-containing amino acids. The chain is Sulfate adenylyltransferase from Saccharomyces cerevisiae (strain ATCC 204508 / S288c) (Baker's yeast).